Here is a 560-residue protein sequence, read N- to C-terminus: uncharacterized protein (560 aa).

Positions 1-29 (MKSALKKSVVSTSISLILASGMAAFAAHA) are cleaved as a signal peptide. Ca(2+) is bound by residues Asp66, Asp67, and Ser132. Ser132 functions as the Nucleophile in the catalytic mechanism. At Ser132 the chain carries 3-oxoalanine (Ser). His185 is an active-site residue. Positions 345 and 346 each coordinate Ca(2+).

This sequence belongs to the sulfatase family. It depends on Ca(2+) as a cofactor. Post-translationally, the conversion to 3-oxoalanine (also known as C-formylglycine, FGly), of a serine or cysteine residue in prokaryotes and of a cysteine residue in eukaryotes, is critical for catalytic activity.

This is an uncharacterized protein from Escherichia coli (strain K12).